A 373-amino-acid chain; its full sequence is tRNA-specific 2-thiouridylase MnmA (373 aa).

Residues 12 to 19 and M38 contribute to the ATP site; that span reads GMSGGVDS. The interval 98–100 is interaction with target base in tRNA; the sequence is NPD. Residue C103 is the Nucleophile of the active site. An intrachain disulfide couples C103 to C200. G127 lines the ATP pocket. Residues 150 to 152 form an interaction with tRNA region; sequence KDQ. C200 functions as the Cysteine persulfide intermediate in the catalytic mechanism. Residues 312 to 313 are interaction with tRNA; that stretch reads RY.

This sequence belongs to the MnmA/TRMU family.

The protein resides in the cytoplasm. It catalyses the reaction S-sulfanyl-L-cysteinyl-[protein] + uridine(34) in tRNA + AH2 + ATP = 2-thiouridine(34) in tRNA + L-cysteinyl-[protein] + A + AMP + diphosphate + H(+). Functionally, catalyzes the 2-thiolation of uridine at the wobble position (U34) of tRNA, leading to the formation of s(2)U34. In Streptococcus thermophilus (strain CNRZ 1066), this protein is tRNA-specific 2-thiouridylase MnmA.